The following is a 463-amino-acid chain: Chaperone SurA (463 aa).

The signal sequence occupies residues 1–25 (MTKPFSVVLASLLAITSTISPLASA). 2 PpiC domains span residues 174-276 (GSKY…KLME) and 289-388 (VTEY…QRVG). Disordered regions lie at residues 329–348 (ATAKESSEDTNSRGQGGDLG) and 434–463 (GDRADNNATAAPAKSADPALPAPPPAKPTR). Residues 439-452 (NNATAAPAKSADPA) show a composition bias toward low complexity. Positions 453–463 (LPAPPPAKPTR) are enriched in pro residues.

It is found in the periplasm. It catalyses the reaction [protein]-peptidylproline (omega=180) = [protein]-peptidylproline (omega=0). In terms of biological role, chaperone involved in the correct folding and assembly of outer membrane proteins. Recognizes specific patterns of aromatic residues and the orientation of their side chains, which are found more frequently in integral outer membrane proteins. May act in both early periplasmic and late outer membrane-associated steps of protein maturation. This Xanthomonas oryzae pv. oryzae (strain MAFF 311018) protein is Chaperone SurA.